Reading from the N-terminus, the 406-residue chain is 4-hydroxy-3-methylbut-2-enyl diphosphate reductase (406 aa).

C66 serves as a coordination point for [4Fe-4S] cluster. H96 contributes to the (2E)-4-hydroxy-3-methylbut-2-enyl diphosphate binding site. H96 is a dimethylallyl diphosphate binding site. H96 serves as a coordination point for isopentenyl diphosphate. A [4Fe-4S] cluster-binding site is contributed by C157. Residue H185 coordinates (2E)-4-hydroxy-3-methylbut-2-enyl diphosphate. H185 contacts dimethylallyl diphosphate. H185 serves as a coordination point for isopentenyl diphosphate. The Proton donor role is filled by E187. Position 250 (T250) interacts with (2E)-4-hydroxy-3-methylbut-2-enyl diphosphate. C288 serves as a coordination point for [4Fe-4S] cluster. Residues S317, S318, N319, and S379 each contribute to the (2E)-4-hydroxy-3-methylbut-2-enyl diphosphate site. Dimethylallyl diphosphate contacts are provided by S317, S318, N319, and S379. Isopentenyl diphosphate is bound by residues S317, S318, N319, and S379.

This sequence belongs to the IspH family. Requires [4Fe-4S] cluster as cofactor.

The enzyme catalyses isopentenyl diphosphate + 2 oxidized [2Fe-2S]-[ferredoxin] + H2O = (2E)-4-hydroxy-3-methylbut-2-enyl diphosphate + 2 reduced [2Fe-2S]-[ferredoxin] + 2 H(+). It carries out the reaction dimethylallyl diphosphate + 2 oxidized [2Fe-2S]-[ferredoxin] + H2O = (2E)-4-hydroxy-3-methylbut-2-enyl diphosphate + 2 reduced [2Fe-2S]-[ferredoxin] + 2 H(+). Its pathway is isoprenoid biosynthesis; dimethylallyl diphosphate biosynthesis; dimethylallyl diphosphate from (2E)-4-hydroxy-3-methylbutenyl diphosphate: step 1/1. It participates in isoprenoid biosynthesis; isopentenyl diphosphate biosynthesis via DXP pathway; isopentenyl diphosphate from 1-deoxy-D-xylulose 5-phosphate: step 6/6. Functionally, catalyzes the conversion of 1-hydroxy-2-methyl-2-(E)-butenyl 4-diphosphate (HMBPP) into a mixture of isopentenyl diphosphate (IPP) and dimethylallyl diphosphate (DMAPP). Acts in the terminal step of the DOXP/MEP pathway for isoprenoid precursor biosynthesis. In Synechococcus sp. (strain RCC307), this protein is 4-hydroxy-3-methylbut-2-enyl diphosphate reductase.